Consider the following 485-residue polypeptide: Aspartyl protease family protein 2 (485 aa).

Residues 1 to 23 (MVGRRKALLFSLCFFFLSLPSFS) form the signal peptide. The tract at residues 43 to 71 (PVSFQPDSDSESLLESEFESGSDSESSSS) is disordered. A compositionally biased stretch (acidic residues) spans 50–64 (SDSESLLESEFESGS). The region spanning 142-480 (YFTRLGVGTP…DLASSRVGFA (339 aa)) is the Peptidase A1 domain. Residues Asp-160 and Asp-365 contribute to the active site.

It belongs to the peptidase A1 family.

Aspartyl protease. Not able to cleave BAG6. In Arabidopsis thaliana (Mouse-ear cress), this protein is Aspartyl protease family protein 2.